The following is a 212-amino-acid chain: Thiamine-phosphate synthase (212 aa).

4-amino-2-methyl-5-(diphosphooxymethyl)pyrimidine is bound by residues 33–37 (QMRFK) and Asn-65. Residues Asp-66 and Asp-85 each coordinate Mg(2+). Residue Thr-104 participates in 4-amino-2-methyl-5-(diphosphooxymethyl)pyrimidine binding. A 2-[(2R,5Z)-2-carboxy-4-methylthiazol-5(2H)-ylidene]ethyl phosphate-binding site is contributed by 130-132 (TNT). Lys-133 provides a ligand contact to 4-amino-2-methyl-5-(diphosphooxymethyl)pyrimidine. Gly-166 lines the 2-[(2R,5Z)-2-carboxy-4-methylthiazol-5(2H)-ylidene]ethyl phosphate pocket.

The protein belongs to the thiamine-phosphate synthase family. It depends on Mg(2+) as a cofactor.

The enzyme catalyses 2-[(2R,5Z)-2-carboxy-4-methylthiazol-5(2H)-ylidene]ethyl phosphate + 4-amino-2-methyl-5-(diphosphooxymethyl)pyrimidine + 2 H(+) = thiamine phosphate + CO2 + diphosphate. The catalysed reaction is 2-(2-carboxy-4-methylthiazol-5-yl)ethyl phosphate + 4-amino-2-methyl-5-(diphosphooxymethyl)pyrimidine + 2 H(+) = thiamine phosphate + CO2 + diphosphate. It catalyses the reaction 4-methyl-5-(2-phosphooxyethyl)-thiazole + 4-amino-2-methyl-5-(diphosphooxymethyl)pyrimidine + H(+) = thiamine phosphate + diphosphate. Its pathway is cofactor biosynthesis; thiamine diphosphate biosynthesis; thiamine phosphate from 4-amino-2-methyl-5-diphosphomethylpyrimidine and 4-methyl-5-(2-phosphoethyl)-thiazole: step 1/1. In terms of biological role, condenses 4-methyl-5-(beta-hydroxyethyl)thiazole monophosphate (THZ-P) and 2-methyl-4-amino-5-hydroxymethyl pyrimidine pyrophosphate (HMP-PP) to form thiamine monophosphate (TMP). The protein is Thiamine-phosphate synthase of Flavobacterium johnsoniae (strain ATCC 17061 / DSM 2064 / JCM 8514 / BCRC 14874 / CCUG 350202 / NBRC 14942 / NCIMB 11054 / UW101) (Cytophaga johnsonae).